The following is a 339-amino-acid chain: Phosphoribosylformylglycinamidine cyclo-ligase (339 aa).

The protein belongs to the AIR synthase family.

The protein resides in the cytoplasm. The catalysed reaction is 2-formamido-N(1)-(5-O-phospho-beta-D-ribosyl)acetamidine + ATP = 5-amino-1-(5-phospho-beta-D-ribosyl)imidazole + ADP + phosphate + H(+). It participates in purine metabolism; IMP biosynthesis via de novo pathway; 5-amino-1-(5-phospho-D-ribosyl)imidazole from N(2)-formyl-N(1)-(5-phospho-D-ribosyl)glycinamide: step 2/2. In Streptococcus thermophilus (strain ATCC BAA-250 / LMG 18311), this protein is Phosphoribosylformylglycinamidine cyclo-ligase.